Consider the following 210-residue polypeptide: uncharacterized protein (210 aa).

This is an uncharacterized protein from Treponema pallidum (strain Nichols).